The primary structure comprises 221 residues: MSKQSLELKATSFTLSVLHIKNHDLIALAAELDQKLSQAPQFFIGAPLVINLKAVEKHCLDLSALKTLLMDRQLIIVGITEASPELIEQARALGLAVIKSGKQATTAPLPQRETKVVKQNVRSGQQIYAKNADLVIFGAVGNGAEVIADGSIHIYGALRGKAMAGAAGDHNSVIIANSLEAELVSISGQYWLAEHLQQHSLDKRACIRRDGESLMVETLPQ.

The protein belongs to the MinC family. As to quaternary structure, interacts with MinD and FtsZ.

Functionally, cell division inhibitor that blocks the formation of polar Z ring septums. Rapidly oscillates between the poles of the cell to destabilize FtsZ filaments that have formed before they mature into polar Z rings. Prevents FtsZ polymerization. The sequence is that of Probable septum site-determining protein MinC from Shewanella denitrificans (strain OS217 / ATCC BAA-1090 / DSM 15013).